Reading from the N-terminus, the 101-residue chain is Urease subunit beta (101 aa).

The protein belongs to the urease beta subunit family. Heterotrimer of UreA (gamma), UreB (beta) and UreC (alpha) subunits. Three heterotrimers associate to form the active enzyme.

It is found in the cytoplasm. It catalyses the reaction urea + 2 H2O + H(+) = hydrogencarbonate + 2 NH4(+). It participates in nitrogen metabolism; urea degradation; CO(2) and NH(3) from urea (urease route): step 1/1. This chain is Urease subunit beta, found in Burkholderia ambifaria (strain MC40-6).